A 349-amino-acid chain; its full sequence is MRVADFTFELPDSLIARHPLAERRASRLLTLDGVSGALAHRQFTDLLEHLRPGDLMVFNNTRVIPARLFGQKASGGKLEILVERVLDSHRVLAHVRSSKSPKPGSSILIDGGGEAEMVARHDALFELKFAEEVLPLLERVGHMPLPPYIDRPDEDSDRERYQTVYSQRLGAVAAPTAGLHFDQPLLDAIAAKGVETAYVTLHVGAGTFQPVRVDNIEDHHMHSEWLEVSQDVVDAVEACKARGGRVIAVGTTSVRSLESAARDGVLKPFSGDTDIFIYPGRPFHVVDCLVTNFHLPESTLLMLVSAFAGYPETMAAYQAAIDNGYRFFSYGDAMFITRNPAPRGPEEQL.

Belongs to the QueA family. As to quaternary structure, monomer.

It localises to the cytoplasm. The catalysed reaction is 7-aminomethyl-7-carbaguanosine(34) in tRNA + S-adenosyl-L-methionine = epoxyqueuosine(34) in tRNA + adenine + L-methionine + 2 H(+). The protein operates within tRNA modification; tRNA-queuosine biosynthesis. Its function is as follows. Transfers and isomerizes the ribose moiety from AdoMet to the 7-aminomethyl group of 7-deazaguanine (preQ1-tRNA) to give epoxyqueuosine (oQ-tRNA). The sequence is that of S-adenosylmethionine:tRNA ribosyltransferase-isomerase from Pseudomonas fluorescens (strain SBW25).